A 718-amino-acid chain; its full sequence is Nucleolar protein 11 (718 aa).

An N6-methyllysine modification is found at Lys346.

In terms of assembly, interacts with UTP4. Interacts with FBL/fibrillarin in a transcription-dependent manner. May associate with the proposed t-UTP subcomplex of the SSU processome containing at least UTP4, WDR43, HEATR1, UTP15, WDR75.

It is found in the nucleus. Its subcellular location is the nucleolus. Ribosome biogenesis factor. May be required for both optimal rDNA transcription and small subunit (SSU) pre-rRNA processing at sites A', A0, 1 and 2b. The protein is Nucleolar protein 11 (NOL11) of Pongo abelii (Sumatran orangutan).